The following is a 200-amino-acid chain: Mediator of RNA polymerase II transcription subunit 22 (200 aa).

Positions Ser-93–Glu-122 form a coiled coil. A disordered region spans residues Pro-169 to Thr-200. Residues His-190–Thr-200 are compositionally biased toward gly residues.

It belongs to the Mediator complex subunit 22 family. As to quaternary structure, component of the Mediator complex, which is composed of MED1, MED4, MED6, MED7, MED8, MED9, MED10, MED11, MED12, MED13, MED13L, MED14, MED15, MED16, MED17, MED18, MED19, MED20, MED21, MED22, MED23, MED24, MED25, MED26, MED27, MED29, MED30, MED31, CCNC, CDK8 and CDC2L6/CDK11. The MED12, MED13, CCNC and CDK8 subunits form a distinct module termed the CDK8 module. Mediator containing the CDK8 module is less active than Mediator lacking this module in supporting transcriptional activation. Individual preparations of the Mediator complex lacking one or more distinct subunits have been variously termed ARC, CRSP, DRIP, PC2, SMCC and TRAP.

The protein localises to the nucleus. In terms of biological role, component of the Mediator complex, a coactivator involved in the regulated transcription of nearly all RNA polymerase II-dependent genes. Mediator functions as a bridge to convey information from gene-specific regulatory proteins to the basal RNA polymerase II transcription machinery. Mediator is recruited to promoters by direct interactions with regulatory proteins and serves as a scaffold for the assembly of a functional preinitiation complex with RNA polymerase II and the general transcription factors. This Mus musculus (Mouse) protein is Mediator of RNA polymerase II transcription subunit 22 (Med22).